The primary structure comprises 555 residues: Urocanate hydratase (555 aa).

NAD(+)-binding positions include Gly51 to Gly52, Gln129, Gly175 to Gly177, Glu195, Gln262 to His266, Tyr272 to Leu273, and Tyr321. Cys409 is an active-site residue. Gly491 contacts NAD(+).

This sequence belongs to the urocanase family. NAD(+) is required as a cofactor.

The protein localises to the cytoplasm. The enzyme catalyses 4-imidazolone-5-propanoate = trans-urocanate + H2O. It functions in the pathway amino-acid degradation; L-histidine degradation into L-glutamate; N-formimidoyl-L-glutamate from L-histidine: step 2/3. Functionally, catalyzes the conversion of urocanate to 4-imidazolone-5-propionate. The sequence is that of Urocanate hydratase from Xanthomonas axonopodis pv. citri (strain 306).